Here is a 73-residue protein sequence, read N- to C-terminus: Venom protein 55.1 (73 aa).

The signal sequence occupies residues 1-19 (MNFLCILFVVSLISSLSKC). At Pro-57 the chain carries Proline amide. A propeptide spanning residues 61 to 73 (RRSFDLYALVNAK) is cleaved from the precursor.

It belongs to the diuretic hormone class 2 family. In terms of tissue distribution, expressed by the venom gland.

It is found in the secreted. In terms of biological role, regulates fluid secretion. This is Venom protein 55.1 from Lychas mucronatus (Chinese swimming scorpion).